A 447-amino-acid chain; its full sequence is N-succinylarginine dihydrolase (447 aa).

Residues 19-28 (AGLSFGNEAS), N110, and 137-138 (HR) each bind substrate. E174 is a catalytic residue. A substrate-binding site is contributed by R212. The active site involves H248. Residues D250 and N359 each coordinate substrate. C365 (nucleophile) is an active-site residue.

It belongs to the succinylarginine dihydrolase family. In terms of assembly, homodimer.

It carries out the reaction N(2)-succinyl-L-arginine + 2 H2O + 2 H(+) = N(2)-succinyl-L-ornithine + 2 NH4(+) + CO2. It functions in the pathway amino-acid degradation; L-arginine degradation via AST pathway; L-glutamate and succinate from L-arginine: step 2/5. In terms of biological role, catalyzes the hydrolysis of N(2)-succinylarginine into N(2)-succinylornithine, ammonia and CO(2). The polypeptide is N-succinylarginine dihydrolase (Escherichia coli (strain SMS-3-5 / SECEC)).